The primary structure comprises 73 residues: UPF0346 protein lp_1865 (73 aa).

This sequence belongs to the UPF0346 family.

The polypeptide is UPF0346 protein lp_1865 (Lactiplantibacillus plantarum (strain ATCC BAA-793 / NCIMB 8826 / WCFS1) (Lactobacillus plantarum)).